The primary structure comprises 366 residues: Inactive protein RESTRICTED TEV MOVEMENT 2 (366 aa).

A sHSP domain is found at 14–121 (VQYEDFVPKS…LPETSRTEAA (108 aa)). Residues 129–133 (LEEKR) form an A-1 repeat. The interval 129–220 (LEEKRLLEES…LEERRLEERK (92 aa)) is 6 X 5 AA repeats A of L-E-E-[SKR]-[ERK]. The A-2 repeat unit spans residues 135 to 139 (LEESR). The stretch at 156–160 (LEEKE) is one A-3 repeat. The stretch at 163–176 (IRKLQEEAKAKEEA) is one B-1 repeat. Residues 163–206 (IRKLQEEAKAKEEAEMRKLQEEAKANEEAAAKKLQEEIEAKEKL) form a 3 X 14 AA repeats B of [IMA]-[RK]-K-L-Q-E-E-A-K-A-K-E-[EK]-[LA] region. One copy of the B-2 repeat lies at 178–191 (MRKLQEEAKANEEA). The B-3 repeat unit spans residues 193 to 205 (AKKLQEEIEAKEK). The stretch at 206–210 (LEERK) is one A-4 repeat. The A-5 repeat unit spans residues 211-215 (LEERR). The A-6 repeat unit spans residues 216–220 (LEERK). The chain crosses the membrane as a helical span at residues 322 to 342 (LMMNVGVAALVIFALGAYVSY). Residues 345-366 (CSSSSSSSSSSPSSSSSSTKPE) form a disordered region. Residues 346–366 (SSSSSSSSSSPSSSSSSTKPE) are compositionally biased toward low complexity.

It belongs to the small heat shock protein (HSP20) family.

Its subcellular location is the cell membrane. In terms of biological role, seems to not be involved in heat resistance. Unable to mediate restriction of long-distance movement of the pathogenic tobacco etch virus (TEV) without causing a hypersensitive response or inducing systemic acquired resistance. The protein is Inactive protein RESTRICTED TEV MOVEMENT 2 (RTM2) of Arabidopsis thaliana (Mouse-ear cress).